The chain runs to 158 residues: Regenerating islet-derived protein 4 (158 aa).

Positions M1–G22 are cleaved as a signal peptide. C30 and C41 are oxidised to a cystine. The region spanning H37–K155 is the C-type lectin domain. A glycan (N-linked (GlcNAc...) asparagine) is linked at N50. 2 disulfides stabilise this stretch: C58–C154 and C129–C146. Residues D98–Q103 and N135–N137 contribute to the a carbohydrate site.

In terms of tissue distribution, highly expressed in the gastrointestinal tract including the duodenum, jejunum, ileum, ileocecum, appendix, descending colon, pancreas and small intestine. Weakly expressed in normal colon and stomach. Strongly expressed in most colorectal tumors than in normal colon. Preferentially expressed in mucinous tumors and in some cases neuro-endocrine tumors. Expressed in mucus-secreting cells and enterocyte-like cells. In small intestine expressed at the basal perinuclear zone of goblet cells.

It localises to the secreted. In terms of biological role, calcium-independent lectin displaying mannose-binding specificity and able to maintain carbohydrate recognition activity in an acidic environment. May be involved in inflammatory and metaplastic responses of the gastrointestinal epithelium. This is Regenerating islet-derived protein 4 (REG4) from Homo sapiens (Human).